The sequence spans 181 residues: UPF0398 protein LMOf2365_1918 (181 aa).

The protein belongs to the UPF0398 family.

The chain is UPF0398 protein LMOf2365_1918 from Listeria monocytogenes serotype 4b (strain F2365).